Consider the following 491-residue polypeptide: MPGLLVAGTTSDAGKSTLTAGLCRAFARRGVRVAPFKAQNMSNNSMVCQGPGGAGVEIGRAQWVQALAANATPEAAMNPVLLKPGSDHRSHVVLMGRSWGELASSNWFEGRQVLADTAHRAFDDLAARYDVVVAEGAGSPAEINLRAGDYVNMGLARHAELPTIVVGDIDRGGVFAAFFGTIALLSVEDQALVAGFVVNKFRGDLDLLAPGLRDLERVTGRQVFGTLPWHADLWLDSEDALDLTGRRAASAGAHRVAVVRLPRISNFTDVDALGLEPDLDVVFASDPRGLGDADLIVVPGTRATIADLAWLRARGLDRALMAHVAAGKPLLGICGGFQMLGRVIRDPDGVEGPVAEADGLGLLDVETTFGAEKVLRLPRGQGLGVTASGYEIHHGRITAGDAAQQFLGGARDGQVFGTMWHGSLEGDALREAFLRETLGLTESGTSFSAARERRLDLLGDLVERHLDVDALLALARHGCAPALPFLPPGAP.

Residues 253–429 (AHRVAVVRLP…WHGSLEGDAL (177 aa)) enclose the GATase cobBQ-type domain. Cys-334 (nucleophile) is an active-site residue. His-421 is a catalytic residue.

Belongs to the CobB/CobQ family. CobQ subfamily.

It functions in the pathway cofactor biosynthesis; adenosylcobalamin biosynthesis. Its function is as follows. Catalyzes amidations at positions B, D, E, and G on adenosylcobyrinic A,C-diamide. NH(2) groups are provided by glutamine, and one molecule of ATP is hydrogenolyzed for each amidation. This Mycobacterium ulcerans (strain Agy99) protein is Cobyric acid synthase.